We begin with the raw amino-acid sequence, 508 residues long: Cytochrome P450 4A12 (508 aa).

The next 2 membrane-spanning stretches (helical) occupy residues Ile10–Leu30 and Phe120–His140. Glu319 contributes to the heme binding site. Ser438 carries the phosphoserine modification. Cys455 contacts heme.

This sequence belongs to the cytochrome P450 family. It depends on heme as a cofactor. As to expression, expressed at proximal straight tubules and preglomerular arteries of the outer medulla as well in the cortex regions of kidney (at protein level).

It localises to the endoplasmic reticulum membrane. The protein localises to the microsome membrane. The enzyme catalyses an organic molecule + reduced [NADPH--hemoprotein reductase] + O2 = an alcohol + oxidized [NADPH--hemoprotein reductase] + H2O + H(+). The catalysed reaction is dodecanoate + reduced [NADPH--hemoprotein reductase] + O2 = 12-hydroxydodecanoate + oxidized [NADPH--hemoprotein reductase] + H2O + H(+). It carries out the reaction dodecanoate + reduced [NADPH--hemoprotein reductase] + O2 = (11R)-hydroxydodecanoate + oxidized [NADPH--hemoprotein reductase] + H2O + H(+). It catalyses the reaction (5Z,8Z,11Z,14Z)-eicosatetraenoate + reduced [NADPH--hemoprotein reductase] + O2 = 20-hydroxy-(5Z,8Z,11Z,14Z)-eicosatetraenoate + oxidized [NADPH--hemoprotein reductase] + H2O + H(+). The enzyme catalyses prostaglandin A1 + reduced [NADPH--hemoprotein reductase] + O2 = 20-hydroxy prostaglandin A1 + oxidized [NADPH--hemoprotein reductase] + H2O + H(+). Its pathway is lipid metabolism; fatty acid metabolism. With respect to regulation, activated by cytochrome b5 and phosphatidylserine. Functionally, a cytochrome P450 monooxygenase involved in the metabolism of fatty acids. Catalyzes predominantly the oxidation of the terminal carbon (omega-oxidation) of saturated and unsaturated fatty acids. May act as a major omega-hydroxylase for dodecanoic (lauric) acid in kidney. At preglomerular arteries, may participate in omega-hydroxylation of (5Z,8Z,11Z,14Z)-eicosatetraenoic acid (arachidonate) to 20-hydroxyeicosatetraenoic acid (20-HETE), a signaling molecule acting both as vasoconstrictive and natriuretic with overall effect on arterial blood pressure. Can also catalyze the oxidation of the penultimate carbon (omega-1 oxidation) of fatty acids with lower efficiency, displaying a preference for the (R)-stereoisomer. Mechanistically, uses molecular oxygen inserting one oxygen atom into a substrate, and reducing the second into a water molecule, with two electrons provided by NADPH via cytochrome P450 reductase (NADPH--hemoprotein reductase). In Rattus norvegicus (Rat), this protein is Cytochrome P450 4A12 (Cyp4a12).